Consider the following 250-residue polypeptide: Histone H1.3 (250 aa).

2 disordered regions span residues 17 to 53 (AASG…QMVD) and 104 to 250 (QTKG…ATKK). The span at 27-42 (KKAAATPKSKKSTAAP) shows a compositional bias: low complexity. Residues 44-118 (SHPPTQQMVD…GASGSFKLSR (75 aa)) form the H15 domain. Residues 120 to 133 (AKKDAKPKASAVEK) are compositionally biased toward basic and acidic residues. Low complexity predominate over residues 138–161 (VNASAAAATKRSSSTSTTKKAAGA). Basic and acidic residues predominate over residues 174 to 191 (KNVEKKKADKEKAKDAKK). Residues 192–234 (TGTIKAKLTTAKAKSSATKPKTPKPKTTSAKPKKVVSATTPKK) show a composition bias toward low complexity. Positions 235-250 (TAVKKPKAKTASATKK) are enriched in basic residues.

Belongs to the histone H1/H5 family.

The protein resides in the nucleus. Its subcellular location is the chromosome. Functionally, histones H1 are necessary for the condensation of nucleosome chains into higher-order structures. The polypeptide is Histone H1.3 (His1.3) (Drosophila virilis (Fruit fly)).